A 264-amino-acid chain; its full sequence is Hemin import ATP-binding protein HmuV (264 aa).

The ABC transporter domain maps to 2-242 (IEAVNICVQR…QNLSDAYHCS (241 aa)). 34 to 41 (GPNGSGKS) contacts ATP.

This sequence belongs to the ABC transporter superfamily. Heme (hemin) importer (TC 3.A.1.14.5) family. In terms of assembly, the complex is composed of two ATP-binding proteins (HmuV), two transmembrane proteins (HmuU) and a solute-binding protein (HmuT).

Its subcellular location is the cell inner membrane. Its function is as follows. Part of the ABC transporter complex HmuTUV involved in hemin import. Responsible for energy coupling to the transport system. The protein is Hemin import ATP-binding protein HmuV of Bartonella quintana (strain Toulouse) (Rochalimaea quintana).